Reading from the N-terminus, the 285-residue chain is HTH-type transcriptional regulator MurR (285 aa).

In terms of domain architecture, HTH rpiR-type spans 1-77 (MLYLTKISNA…MALIGEYSAS (77 aa)). The segment at residues 37–56 (SRQMAKQLGISQSSIVKFAQ) is a DNA-binding region (H-T-H motif). The SIS domain maps to 128–279 (IIEVISKAPF…SLKMIQRSSE (152 aa)).

As to quaternary structure, homotetramer.

It participates in amino-sugar metabolism; N-acetylmuramate degradation [regulation]. Functionally, represses the expression of the murPQ operon involved in the uptake and degradation of N-acetylmuramic acid (MurNAc). Binds to two adjacent inverted repeats within the operator region. MurNAc 6-phosphate, the substrate of MurQ, is the specific inducer that weakens binding of MurR to the operator. This is HTH-type transcriptional regulator MurR from Shigella boydii serotype 18 (strain CDC 3083-94 / BS512).